The following is a 257-amino-acid chain: Triosephosphate isomerase (257 aa).

Positions 11 and 13 each coordinate substrate. Residue His96 is the Electrophile of the active site. The active-site Proton acceptor is Glu170.

This sequence belongs to the triosephosphate isomerase family. As to quaternary structure, homodimer.

Its subcellular location is the cytoplasm. It catalyses the reaction D-glyceraldehyde 3-phosphate = dihydroxyacetone phosphate. The catalysed reaction is dihydroxyacetone phosphate = methylglyoxal + phosphate. It functions in the pathway carbohydrate biosynthesis; gluconeogenesis. It participates in carbohydrate degradation; glycolysis; D-glyceraldehyde 3-phosphate from glycerone phosphate: step 1/1. Its function is as follows. Triosephosphate isomerase is an extremely efficient metabolic enzyme that catalyzes the interconversion between dihydroxyacetone phosphate (DHAP) and D-glyceraldehyde-3-phosphate (G3P) in glycolysis and gluconeogenesis. Functionally, it is also responsible for the non-negligible production of methylglyoxal a reactive cytotoxic side-product that modifies and can alter proteins, DNA and lipids. The polypeptide is Triosephosphate isomerase (Giardia intestinalis (Giardia lamblia)).